The following is a 143-amino-acid chain: Large ribosomal subunit protein uL15 (143 aa).

The segment at 1–52 is disordered; sequence MELNTIQPADGAKHYKRRVGRGIGSGLGKTAGRGHKGQKSRSGGFHKVGFEG. The span at 21 to 31 shows a compositional bias: gly residues; sequence RGIGSGLGKTA.

It belongs to the universal ribosomal protein uL15 family. Part of the 50S ribosomal subunit.

Its function is as follows. Binds to the 23S rRNA. This chain is Large ribosomal subunit protein uL15, found in Herminiimonas arsenicoxydans.